Consider the following 289-residue polypeptide: 3-hydroxy-16-methoxy-2,3-dihydrotabersonine N-methyltransferase (289 aa).

The segment at 71–80 (MLDVGSGLGG) is SAM motif I. The tract at residues 134–142 (GKFDVVFTI) is SAM motif II. The interval 161-170 (VAAPGAAIII) is SAM motif III. The Microbody targeting signal motif lies at 287–289 (KSI).

It belongs to the class I-like SAM-binding methyltransferase superfamily. gTMT family. As to quaternary structure, homodimer. As to expression, mainly expressed in young leaves, and, to a lower extent, in mature leaves, flowers, stems and roots (at protein level).

Its subcellular location is the thylakoid. It localises to the peroxisome. It carries out the reaction (3R)-3-hydroxy-16-methoxy-2,3-dihydrotabersonine + S-adenosyl-L-methionine = deacetoxyvindoline + S-adenosyl-L-homocysteine + H(+). Its pathway is alkaloid biosynthesis; vindoline biosynthesis. Inhibited by gamma-tocopherol. In terms of biological role, S-adenosyl-L-methionine-dependent N-methyltransferase that catalyzes a nitrogen methylation involved in vindoline biosynthesis. Displays a strict requirement for a 2,3-dihydro bond in the aspidosperma skeleton. Can use 2,3-dihydrotabersonine, 2,3-dihydro-3-hydroxytabersonine and 2,3,6,7-tetraydro-3-hydroxytabersonine as substrates, but not tabersonine, vincadifformine, 21-hydroxycyclolochnericine, tryptamine, norharmane, harmaline, catharanthine, norajmaline, ajmaline, serpentine, ajmalicine, yohimbine or gamma-tocopherol. Inactive with picrinine as substrate. This is 3-hydroxy-16-methoxy-2,3-dihydrotabersonine N-methyltransferase from Catharanthus roseus (Madagascar periwinkle).